A 181-amino-acid chain; its full sequence is Large ribosomal subunit protein uL5 (181 aa).

Belongs to the universal ribosomal protein uL5 family. As to quaternary structure, part of the 50S ribosomal subunit; contacts the 5S rRNA and probably tRNA. Forms a bridge to the 30S subunit in the 70S ribosome.

Its function is as follows. This is one of the proteins that bind and probably mediate the attachment of the 5S RNA into the large ribosomal subunit, where it forms part of the central protuberance. In the 70S ribosome it contacts protein S13 of the 30S subunit (bridge B1b), connecting the 2 subunits; this bridge is implicated in subunit movement. May contact the P site tRNA; the 5S rRNA and some of its associated proteins might help stabilize positioning of ribosome-bound tRNAs. The chain is Large ribosomal subunit protein uL5 from Methanococcus vannielii.